The chain runs to 393 residues: MLVFIFLAVTLSSENESSSQTNDCAHLIQKCLIDANGCEQSWRSMEDTCLTPGDSCKINNSLHCNLSIQALVEKNFQFKECLCMDDLHCTVNKLFGKKCTNKTDNMEKDNKDKWNLTTTPFYHGFKQMQSCLEVTEACVGDVVCNAQLALYLKACSANGNLCDVKHCQAAIRFFYQNMPFNTAQMLAFCDCAQSDIPCQQSKETLHSKPCALNIVPPPTCLSVIHTCRNDELCRTHYRTFQTECWPHITGKCHEDETCISMLGKQDLTCSGSESCRAAFLGTFGTVLQVPCACRGVTQAEEHVCMIFQHMLHSKSCFNYPTPNVKDISSYEKKNSKEITLTGFNSFFNGELLYVVVCMAVTCGILFLVMLKLRIQSEKRDPSSIEIAGGVIIQ.

Positions 1 to 19 (MLVFIFLAVTLSSENESSS) are cleaved as a signal peptide. The Extracellular segment spans residues 20–349 (QTNDCAHLIQ…LTGFNSFFNG (330 aa)). Residues Asn59, Asn65, Asn101, and Asn115 are each glycosylated (N-linked (GlcNAc...) asparagine). Cystine bridges form between Cys131–Cys189, Cys138–Cys144, Cys155–Cys167, Cys162–Cys210, Cys191–Cys198, Cys220–Cys291, Cys227–Cys233, Cys244–Cys275, Cys252–Cys258, Cys269–Cys316, and Cys293–Cys304. Positions 149 to 228 (ALYLKACSAN…TCLSVIHTCR (80 aa)) are required for interaction with GDF15. The chain crosses the membrane as a helical span at residues 350–370 (ELLYVVVCMAVTCGILFLVML). The Cytoplasmic segment spans residues 371–393 (KLRIQSEKRDPSSIEIAGGVIIQ).

The protein belongs to the GDNFR family. In terms of assembly, interacts (via the extracellular domain) with GDF15 and RET; receptor of GDF15, mediates cellular signaling through interaction with RET after GDF15-binding. Interaction with RET requires previous GDF15-binding. Post-translationally, cleaved and inactivated by MMP14, inhibiting the GDF15-GFRAL aversive response. Expressed in the brainstem, restricted to cells in the area postrema and the immediately adjacent region of the nucleus tractus solitarius.

It is found in the cell membrane. Its activity is regulated as follows. Specifically inhibited by 3P10 monoclonal antibody. Strongly activated by LY3463251, a long-acting and stable agonist composed of GDF15 conjugated monomeric human IgG4 Fc. Functionally, brainstem-restricted receptor for GDF15 hormone, which triggers an aversive response, characterized by nausea, vomiting, and/or loss of appetite in response to various stresses. The aversive response is both required to reduce continuing exposure to those stresses at the time of exposure and to promote avoidance behavior in the future. The GDF15-GFRAL aversive response is triggered by stresses, such as anticancer drugs (camptothecin or cisplatin), cancers or drugs such as metformin. Upon interaction with its ligand, GDF15, mediates the GDF15-induced autophosphorylation and activation of the RET tyrosine kinase receptor, leading to activation of MAPK- and AKT- signaling pathways. Ligand-binding activates GFRAL-expressing neurons localized in the area postrema and nucleus tractus solitarius of the brainstem. The GDF15-GFRAL signal induces expression of genes involved in metabolism, such as lipid metabolism in adipose tissues. The sequence is that of GDNF family receptor alpha-like (Gfral) from Mus musculus (Mouse).